Consider the following 473-residue polypeptide: GDP-fucose protein O-fucosyltransferase 2 (473 aa).

Residues 1-25 form the signal peptide; that stretch reads MKNMIYNLISISLYSLIIILTDIYA. GDP-beta-L-fucose contacts are provided by residues 59–63, 283–285, and 379–380; these read GEGFN, HLR, and RF. Glu60 acts as the Proton acceptor in catalysis.

This sequence belongs to the glycosyltransferase 68 family.

It is found in the endoplasmic reticulum. The catalysed reaction is L-seryl-[protein] + GDP-beta-L-fucose = 3-O-(alpha-L-fucosyl)-L-seryl-[protein] + GDP + H(+). It carries out the reaction L-threonyl-[protein] + GDP-beta-L-fucose = 3-O-(alpha-L-fucosyl)-L-threonyl-[protein] + GDP + H(+). It functions in the pathway protein modification; protein glycosylation. Catalyzes the reaction that attaches fucose through an O-glycosidic linkage to a conserved serine or threonine residue in the consensus sequence C1-X-X-S/T-C2 of thrombospondin type I repeats (TSRs) where C1 and C2 are the first and second cysteines of the repeat, respectively. O-fucosylates sporozoite proteins CSP and TRAP. O-fucosylation regulates stability and intracellular trafficking of TRAP but not of CSP. Dispensable for parasite transmission to the mosquito vector and/or infection of the vertebrate host hepatocytes. The sequence is that of GDP-fucose protein O-fucosyltransferase 2 from Plasmodium berghei (strain Anka).